Consider the following 663-residue polypeptide: Guanine nucleotide exchange factor subunit RGP1 (663 aa).

Phosphoserine occurs at positions 351, 354, 357, 363, 364, and 370. A disordered region spans residues 412-443 (GKDEDSSDPEPNDSHFSNEMVTSAESSLRSDA). The span at 426–440 (HFSNEMVTSAESSLR) shows a compositional bias: polar residues.

This sequence belongs to the RGP1 family. Forms a complex with RIC1.

It is found in the golgi apparatus. The RIC1-RGP1 complex acts as a guanine nucleotide exchange factor (GEF), which activates YPT6 by exchanging bound GDP for free GTP. It is thereby required for efficient fusion of endosome-derived vesicles with the Golgi. The RIC1-RGP1 participates in the recycling of SNC1, presumably by mediating fusion of endosomal vesicles with the Golgi compartment. Its function is as follows. Required for proper mitotic growth. This chain is Guanine nucleotide exchange factor subunit RGP1, found in Saccharomyces cerevisiae (strain ATCC 204508 / S288c) (Baker's yeast).